Here is a 290-residue protein sequence, read N- to C-terminus: Acetyl-coenzyme A carboxylase carboxyl transferase subunit beta (290 aa).

The region spanning Leu29–Lys290 is the CoA carboxyltransferase N-terminal domain. Zn(2+)-binding residues include Cys33, Cys36, Cys52, and Cys55. The C4-type zinc-finger motif lies at Cys33–Cys55.

Belongs to the AccD/PCCB family. As to quaternary structure, acetyl-CoA carboxylase is a heterohexamer composed of biotin carboxyl carrier protein (AccB), biotin carboxylase (AccC) and two subunits each of ACCase subunit alpha (AccA) and ACCase subunit beta (AccD). Zn(2+) is required as a cofactor.

It is found in the cytoplasm. The catalysed reaction is N(6)-carboxybiotinyl-L-lysyl-[protein] + acetyl-CoA = N(6)-biotinyl-L-lysyl-[protein] + malonyl-CoA. It functions in the pathway lipid metabolism; malonyl-CoA biosynthesis; malonyl-CoA from acetyl-CoA: step 1/1. Functionally, component of the acetyl coenzyme A carboxylase (ACC) complex. Biotin carboxylase (BC) catalyzes the carboxylation of biotin on its carrier protein (BCCP) and then the CO(2) group is transferred by the transcarboxylase to acetyl-CoA to form malonyl-CoA. In Prochlorococcus marinus (strain MIT 9211), this protein is Acetyl-coenzyme A carboxylase carboxyl transferase subunit beta.